The chain runs to 342 residues: Transmembrane protein 268 (342 aa).

Positions 1–30 (MACEPQVDPGATGPLPPSSPGWSALPGGSP) are disordered. Transmembrane regions (helical) follow at residues 105-125 (AFAVVFYVVVWANIYSTSQMF) and 132-152 (AGMLLVTLAAVSLTLTLVLVF).

As to quaternary structure, interacts with ITGAM; this interaction inhibits ITGAM degradation via the endosome-lysosome pathway. Interacts with ITGB4; this interaction prevents ITGB4 degradation.

The protein localises to the cell membrane. Its function is as follows. Stabilizes cell surface expression of ITGAM and participates in the adhesion and migration of phagocytes during bacterial clearance. This chain is Transmembrane protein 268, found in Homo sapiens (Human).